The chain runs to 353 residues: 4-hydroxy-3-methylbut-2-en-1-yl diphosphate synthase (flavodoxin) (353 aa).

The [4Fe-4S] cluster site is built by C263, C266, C298, and E305.

This sequence belongs to the IspG family. [4Fe-4S] cluster is required as a cofactor.

It carries out the reaction (2E)-4-hydroxy-3-methylbut-2-enyl diphosphate + oxidized [flavodoxin] + H2O + 2 H(+) = 2-C-methyl-D-erythritol 2,4-cyclic diphosphate + reduced [flavodoxin]. It functions in the pathway isoprenoid biosynthesis; isopentenyl diphosphate biosynthesis via DXP pathway; isopentenyl diphosphate from 1-deoxy-D-xylulose 5-phosphate: step 5/6. Converts 2C-methyl-D-erythritol 2,4-cyclodiphosphate (ME-2,4cPP) into 1-hydroxy-2-methyl-2-(E)-butenyl 4-diphosphate. In Geobacter sulfurreducens (strain ATCC 51573 / DSM 12127 / PCA), this protein is 4-hydroxy-3-methylbut-2-en-1-yl diphosphate synthase (flavodoxin).